The following is a 527-amino-acid chain: Estrogen receptor beta (527 aa).

The modulating stretch occupies residues 1 to 145 (MDVKNSPSSL…SPSSKRDAHF (145 aa)). A phosphoserine; by MAPK mark is found at serine 84 and serine 102. 2 consecutive NR C4-type zinc fingers follow at residues 146-166 (CAVC…CEGC) and 182-206 (CPAT…LRKC). Residues 146 to 211 (CAVCSDYASG…RLRKCYEVGM (66 aa)) constitute a DNA-binding region (nuclear receptor). Positions 261-495 (SPEQLVLTLL…DLLLEMLNAH (235 aa)) constitute an NR LBD domain. A disordered region spans residues 505 to 527 (TRSERNLAEDSESKEGSQKPQAQ). Over residues 506–521 (RSERNLAEDSESKEGS) the composition is skewed to basic and acidic residues.

Belongs to the nuclear hormone receptor family. NR3 subfamily. As to quaternary structure, binds DNA as a homodimer. Can form a heterodimer with ESR1. Interacts with NCOA1, NCOA3, NCOA5 and NCOA6 coactivators, leading to a strong increase of transcription of target genes. Interacts with UBE1C and AKAP13. Interacts with DNTTIP2. Interacts with CCDC62 in the presence of estradiol/E2; this interaction seems to enhance the transcription of target genes. Interacts with DNAAF4. Interacts with PRMT2. Interacts with CCAR2 (via N-terminus) in a ligand-independent manner. Interacts with RBM39, in the presence of estradiol (E2). Interacts with STUB1/CHIP. Post-translationally, phosphorylation at Ser-84 and Ser-102 recruits NCOA1.

It is found in the nucleus. Nuclear hormone receptor. Binds estrogens with an affinity similar to that of ESR1/ER-alpha, and activates expression of reporter genes containing estrogen response elements (ERE) in an estrogen-dependent manner. The sequence is that of Estrogen receptor beta (ESR2) from Ovis aries (Sheep).